We begin with the raw amino-acid sequence, 102 residues long: Class I hydrophobin 1 (102 aa).

Residues 1–18 (MSLFKILVAAATVATALA) form the signal peptide. Cystine bridges form between Cys-37-Cys-84, Cys-45-Cys-78, Cys-46-Cys-63, and Cys-85-Cys-97.

Belongs to the fungal hydrophobin family.

The protein localises to the secreted. It localises to the cell wall. Aerial growth, conidiation, and dispersal of filamentous fungi in the environment rely upon a capability of their secreting small amphipathic proteins called hydrophobins (HPBs) with low sequence identity. Class I can self-assemble into an outermost layer of rodlet bundles on aerial cell surfaces, conferring cellular hydrophobicity that supports fungal growth, development and dispersal; whereas Class II form highly ordered films at water-air interfaces through intermolecular interactions but contribute nothing to the rodlet structure. Hyd1 is essential for stress tolerance, conidial hydrophobicity, adhesion to insect cuticle, and insect infectivity/pathogenicity. Plays a neglectable role in hyphal growth and asexual development. In Metarhizium robertsii (strain ARSEF 23 / ATCC MYA-3075) (Metarhizium anisopliae (strain ARSEF 23)), this protein is Class I hydrophobin 1.